The following is a 294-amino-acid chain: Elongation factor Ts (294 aa).

The segment at 80-83 (TDFV) is involved in Mg(2+) ion dislocation from EF-Tu.

The protein belongs to the EF-Ts family.

The protein resides in the cytoplasm. Functionally, associates with the EF-Tu.GDP complex and induces the exchange of GDP to GTP. It remains bound to the aminoacyl-tRNA.EF-Tu.GTP complex up to the GTP hydrolysis stage on the ribosome. The polypeptide is Elongation factor Ts (Listeria innocua serovar 6a (strain ATCC BAA-680 / CLIP 11262)).